Consider the following 370-residue polypeptide: Ubiquitin carboxyl-terminal hydrolase 12 (370 aa).

The short motif at 1-4 (MEIL) is the Required for plasma membrane localization of USP12/WDR20 element. The 331-residue stretch at 39 to 369 (FGLVNFGNTC…SGYILFYQSR (331 aa)) folds into the USP domain. Cysteine 48 (nucleophile) is an active-site residue. The disordered stretch occupies residues 145 to 169 (KQEKQNGRLPNGNIDNENNNSTPDP). Positions 157–168 (NIDNENNNSTPD) are enriched in polar residues. Residues cysteine 186, cysteine 189, cysteine 233, and cysteine 236 each coordinate Zn(2+). The Proton acceptor role is filled by histidine 317.

It belongs to the peptidase C19 family. USP12/USP46 subfamily. As to quaternary structure, interacts with WDR48. Interacts with WDR20; this interaction promotes translocation of the USP12 complex to the plasma membrane. Component of the USP12-WDR20-WDR48 deubiquitinating complex. Component of the USP12-DMWD-WDR48 deubiquitinating complex. Interacts with PHLPP1. Interacts with RBPJ. Interacts with CBP; this interaction blocks the acetyltransferase activity of CREBBP. Interacts with ITCH; the interaction is more efficient when both USP12 and WDR48/UAF1 are involved and may mediate recruitment of the USP12 deubiquitinating complex to Notch. Interacts with OPTN and SQSTM1/p62; the interaction is independent of deubiquitinase activity and may be involved in regulation of autophagic flux. (Microbial infection) Interacts with Epstein-Barr virus protein EBNA3.

The protein localises to the nucleus. It localises to the cytoplasm. It is found in the cell membrane. It carries out the reaction Thiol-dependent hydrolysis of ester, thioester, amide, peptide and isopeptide bonds formed by the C-terminal Gly of ubiquitin (a 76-residue protein attached to proteins as an intracellular targeting signal).. Its activity is regulated as follows. Activated by interaction with WDR20, WDR48 and DMWD through different allosteric mechanisms. Deubiquitinating enzyme that plays various roles in the regulation of the immune response and inflammation. During TCR engagement and activation, translocates into the cytoplasm and deubiquitinates its substrates LAT and TRAT1 and prevents their lysosome-dependent degradation to stabilize the TCR signaling complex at the plasma membrane. Plays an essential role in the selective LPS-induced macrophage response through the activation of NF-kappa-B pathway. In addition, promotes that antiviral immune response through targeting DNA sensor IFI16 to inhibit its proteasome-dependent degradation. Participates in the interferon signaling pathway and antiviral response independently of its deubiquitinase activity by maintaining nuclear phosphorylated STAT1 levels via inhibition of its CREBBP-mediated acetylation and subsequent dephosphorylation. Plays an intrinsic role in promoting the differentiation, activation and proliferation of CD4(+) T-cell by activating the NF-kappa-B signaling pathway through deubiquitinating and stabilizing B-cell lymphoma/leukemia 10/BCL10. In myeloid-derived suppressor cells promotes the activation of the NF-kappa-B via deubiquitination and stabilization of RELA. Regulates the 'Lys-63'-linked polyubiquitin chains of BAX and thereby modulates the mitochondrial apoptotic process. Negative regulator of NOTCH signaling that specifically deubiquitinates non-activated NOTCH receptors to target them for lysosomal degradation; deubiquitination of NOTCH stimulates its transport form late endosomes to lysosomes. Protects neurons against HTT/huntingtin-induced polyglutamine expansion-dependent neurodegeneration through regulation of autophagic flux. This function is independent of deubiquitinase activity or of other components of the USP12-WDR20-WDR48 deubiquitinating complex. In complex with WDR48, acts as a potential tumor suppressor by positively regulating PHLPP1 stability. Functionally, (Microbial infection) Forms a complex with Epstein-Barr virus protein EBNA3 which is an active deubiquitinase activity that may select specific substrates to promote B-lymphocyte transformation. The sequence is that of Ubiquitin carboxyl-terminal hydrolase 12 (USP12) from Homo sapiens (Human).